Reading from the N-terminus, the 453-residue chain is Glutamyl-tRNA reductase (453 aa).

Substrate contacts are provided by residues 54–57 (TCNR), serine 113, 118–120 (EAQ), and glutamine 124. Catalysis depends on cysteine 55, which acts as the Nucleophile. An NADP(+)-binding site is contributed by 193-198 (GGGEVS).

The protein belongs to the glutamyl-tRNA reductase family. As to quaternary structure, homodimer.

It carries out the reaction (S)-4-amino-5-oxopentanoate + tRNA(Glu) + NADP(+) = L-glutamyl-tRNA(Glu) + NADPH + H(+). Its pathway is porphyrin-containing compound metabolism; protoporphyrin-IX biosynthesis; 5-aminolevulinate from L-glutamyl-tRNA(Glu): step 1/2. It participates in porphyrin-containing compound metabolism; chlorophyll biosynthesis. Functionally, catalyzes the NADPH-dependent reduction of glutamyl-tRNA(Glu) to glutamate 1-semialdehyde (GSA). This chain is Glutamyl-tRNA reductase, found in Chloroflexus aggregans (strain MD-66 / DSM 9485).